We begin with the raw amino-acid sequence, 363 residues long: Trans-2,3-enoyl-CoA reductase-like (363 aa).

Position 37 is a phosphoserine (serine 37). The next 3 membrane-spanning stretches (helical) occupy residues 143–163 (WTTV…LFYL), 217–237 (LIMS…YINH), and 311–331 (ISFT…LMSI).

It belongs to the steroid 5-alpha reductase family. In terms of tissue distribution, predominantly expressed in the heart and skeletal muscle.

Its subcellular location is the membrane. It is found in the endoplasmic reticulum. The polypeptide is Trans-2,3-enoyl-CoA reductase-like (TECRL) (Homo sapiens (Human)).